A 399-amino-acid polypeptide reads, in one-letter code: Cytochrome P450 FAS1 (399 aa).

Cys-349 contacts heme.

This sequence belongs to the cytochrome P450 family. The cofactor is heme.

The protein resides in the cytoplasm. Its function is as follows. May be involved in the biosynthesis of cytokinin phytohormones and in host plant fasciation (leafy gall). This Rhodococcoides fascians (Rhodococcus fascians) protein is Cytochrome P450 FAS1 (fas1).